A 196-amino-acid polypeptide reads, in one-letter code: Lipoprotein signal peptidase (196 aa).

A run of 3 helical transmembrane segments spans residues 43-63 (LMLKVTAFLNMVYTWNYGISF), 75-95 (AVFILTNSIIVCYLYYLMVCS), and 100-120 (GFAGYSFVIGGAVGNLIDRLF). Catalysis depends on residues Asp-126 and Asp-144. The chain crosses the membrane as a helical span at residues 135 to 155 (YSFPVFNLADCFITIGVIILI).

The protein belongs to the peptidase A8 family.

The protein localises to the cell inner membrane. The enzyme catalyses Release of signal peptides from bacterial membrane prolipoproteins. Hydrolyzes -Xaa-Yaa-Zaa-|-(S,diacylglyceryl)Cys-, in which Xaa is hydrophobic (preferably Leu), and Yaa (Ala or Ser) and Zaa (Gly or Ala) have small, neutral side chains.. It participates in protein modification; lipoprotein biosynthesis (signal peptide cleavage). In terms of biological role, this protein specifically catalyzes the removal of signal peptides from prolipoproteins. This chain is Lipoprotein signal peptidase, found in Rickettsia canadensis (strain McKiel).